Consider the following 431-residue polypeptide: MQPRFLLHGALLALGIQLCLSIGKITGHISSIEATAADIHDAPSTTTKYVQRTVYAGREKGKIGGPADSWPQRKLDDFLQNHGVKSLDVPPIETPSQFWRKPLQYVSKVTDKCKSFYEKEKNHASHNAQKLDVWIFNSWTNSELSRWLIKNKYEVPEPGTREQLLETVFQASMGDAISTNDELESWSNNLLLSMLDQKNITVPIGASHDDLIVLARRYYDIEERKSQDKVTNITDSQPAPYMKEIIHLWSDGRLIDFLRERNIPISVLSPRETLLKEAYANRFTPRVMIASNVLDGWSSEDLLDWIWKYNKRGSIFSHVAYNSRHELIHAAKLFYMDVASEWSSSDMASLNDSLYSHPSVSKQSTWTEEELKEELESFGELVPVPFSSTKAFERLLPHLYYYLRGPAFLNRIHYWQTFLGNSLKRAFVLSQ.

A signal peptide spans 1–21 (MQPRFLLHGALLALGIQLCLS).

The protein resides in the nucleus inner membrane. Its function is as follows. Inner nuclear envelope protein involved in nuclear fission, which is achieved via local disassembly of nuclear pores within the narrow bridge that links segregating daughter nuclei. Les1 restricts the process of local nuclear envelope breakdown to the bridge midzone to prevent the leakage of material from daughter nuclei during mitosis. This is Nuclear bridge Ish domain protein les1 from Schizosaccharomyces pombe (strain 972 / ATCC 24843) (Fission yeast).